We begin with the raw amino-acid sequence, 331 residues long: Protein RecA (331 aa).

61–68 contributes to the ATP binding site; it reads GPESSGKT.

The protein belongs to the RecA family.

It localises to the cytoplasm. In terms of biological role, can catalyze the hydrolysis of ATP in the presence of single-stranded DNA, the ATP-dependent uptake of single-stranded DNA by duplex DNA, and the ATP-dependent hybridization of homologous single-stranded DNAs. It interacts with LexA causing its activation and leading to its autocatalytic cleavage. In Mycoplasma mobile (strain ATCC 43663 / 163K / NCTC 11711) (Mesomycoplasma mobile), this protein is Protein RecA.